The chain runs to 309 residues: Protease HtpX homolog (309 aa).

A run of 2 helical transmembrane segments spans residues 7–27 (TTVL…MLGG) and 29–49 (QGMM…YWYS). Residue H131 participates in Zn(2+) binding. The active site involves E132. A Zn(2+)-binding site is contributed by H135. Transmembrane regions (helical) follow at residues 141–161 (ILIG…ASMA) and 182–202 (IGLI…QMAI). E207 is a binding site for Zn(2+). Positions 278–309 (RHGSDSGTGNRDSSIRRRNMNTEAKAAWDRLR) are disordered.

Belongs to the peptidase M48B family. Requires Zn(2+) as cofactor.

Its subcellular location is the cell inner membrane. The polypeptide is Protease HtpX homolog (Desulforapulum autotrophicum (strain ATCC 43914 / DSM 3382 / VKM B-1955 / HRM2) (Desulfobacterium autotrophicum)).